Consider the following 428-residue polypeptide: Adenylosuccinate synthetase (428 aa).

Residues 12–18 and 40–42 each bind GTP; these read GDEGKGK and GHT. D13 serves as the catalytic Proton acceptor. Mg(2+) is bound by residues D13 and G40. IMP-binding positions include 13–16, 38–41, T129, R143, Q224, T239, and R303; these read DEGK and NAGH. The active-site Proton donor is the H41. 299–305 provides a ligand contact to substrate; sequence VTTGRIR. Residues R305, 331–333, and 410–412 contribute to the GTP site; these read KVD and AYG.

Belongs to the adenylosuccinate synthetase family. As to quaternary structure, homodimer. The cofactor is Mg(2+).

It localises to the cytoplasm. The catalysed reaction is IMP + L-aspartate + GTP = N(6)-(1,2-dicarboxyethyl)-AMP + GDP + phosphate + 2 H(+). The protein operates within purine metabolism; AMP biosynthesis via de novo pathway; AMP from IMP: step 1/2. In terms of biological role, plays an important role in the de novo pathway of purine nucleotide biosynthesis. Catalyzes the first committed step in the biosynthesis of AMP from IMP. The chain is Adenylosuccinate synthetase from Francisella philomiragia subsp. philomiragia (strain ATCC 25017 / CCUG 19701 / FSC 153 / O#319-036).